A 317-amino-acid chain; its full sequence is Serpentine receptor class delta-46 (317 aa).

The next 7 membrane-spanning stretches (helical) occupy residues 9–29, 42–62, 91–111, 129–149, 185–205, 239–259, and 269–289; these read FYIIFFLIVFPTQLLLLYVII, IFLCNCSCQIFSMITLVLLQA, YVLCEGTVLMSSILIFITMYV, VIILSLSPLFITMSAEAYLTI, QIVFCTICGFFVIFPLIMFCL, AFLPLFCVCPIFICSFVALIT, and FVSVVLLLPTFFEPYITFYTV.

The protein belongs to the nematode receptor-like protein srd family.

Its subcellular location is the membrane. The protein is Serpentine receptor class delta-46 (srd-46) of Caenorhabditis elegans.